Here is a 360-residue protein sequence, read N- to C-terminus: S-adenosylmethionine:tRNA ribosyltransferase-isomerase (360 aa).

The protein belongs to the QueA family. Monomer.

It localises to the cytoplasm. The enzyme catalyses 7-aminomethyl-7-carbaguanosine(34) in tRNA + S-adenosyl-L-methionine = epoxyqueuosine(34) in tRNA + adenine + L-methionine + 2 H(+). It participates in tRNA modification; tRNA-queuosine biosynthesis. In terms of biological role, transfers and isomerizes the ribose moiety from AdoMet to the 7-aminomethyl group of 7-deazaguanine (preQ1-tRNA) to give epoxyqueuosine (oQ-tRNA). The chain is S-adenosylmethionine:tRNA ribosyltransferase-isomerase from Sinorhizobium medicae (strain WSM419) (Ensifer medicae).